The chain runs to 115 residues: NAD(P)H-quinone oxidoreductase subunit M (115 aa).

The protein belongs to the complex I NdhM subunit family. As to quaternary structure, NDH-1 can be composed of about 15 different subunits; different subcomplexes with different compositions have been identified which probably have different functions.

It localises to the cellular thylakoid membrane. It carries out the reaction a plastoquinone + NADH + (n+1) H(+)(in) = a plastoquinol + NAD(+) + n H(+)(out). The catalysed reaction is a plastoquinone + NADPH + (n+1) H(+)(in) = a plastoquinol + NADP(+) + n H(+)(out). In terms of biological role, NDH-1 shuttles electrons from an unknown electron donor, via FMN and iron-sulfur (Fe-S) centers, to quinones in the respiratory and/or the photosynthetic chain. The immediate electron acceptor for the enzyme in this species is believed to be plastoquinone. Couples the redox reaction to proton translocation, and thus conserves the redox energy in a proton gradient. Cyanobacterial NDH-1 also plays a role in inorganic carbon-concentration. This Prochlorococcus marinus (strain MIT 9312) protein is NAD(P)H-quinone oxidoreductase subunit M.